The following is a 344-amino-acid chain: MMVIRSVERSDVSALMQLASKTGGGLTSLPANEATLSARIERAIKTWQGELPKSEQGYVFVLEDSETGTVAGICAIEVAVGLNDPWYNYRVGTLVHASKELNVYNALPTLFLSNDHTGSSELCTLFLDPDWRKEGNGYLLSKSRFMFMAAFRDKFNDKVVAEMRGVIDEHGYSPFWQSLGKRFFSMDFSRADFLCGTGQKAFIAELMPKHPIYTHFLSQEAQDVIGQVHPQTAPARAVLEKEGFRYRNYIDIFDGGPTLECDIDRVRAIRKSRLVEVAEGQPAQGDFPACLVANENYHHFRVVLVRTDPATERLILTAAQLDALKCHAGDRVRLVRLCAEEKTA.

Leu-125 provides a ligand contact to succinyl-CoA. His-229 serves as the catalytic Proton donor.

It belongs to the arginine N-succinyltransferase family.

The catalysed reaction is succinyl-CoA + L-arginine = N(2)-succinyl-L-arginine + CoA + H(+). It participates in amino-acid degradation; L-arginine degradation via AST pathway; L-glutamate and succinate from L-arginine: step 1/5. In terms of biological role, catalyzes the transfer of succinyl-CoA to arginine to produce N(2)-succinylarginine. This Shigella dysenteriae serotype 1 (strain Sd197) protein is Arginine N-succinyltransferase.